The primary structure comprises 556 residues: Formate--tetrahydrofolate ligase (556 aa).

65–72 (TPAGEGKS) contributes to the ATP binding site.

The protein belongs to the formate--tetrahydrofolate ligase family.

It catalyses the reaction (6S)-5,6,7,8-tetrahydrofolate + formate + ATP = (6R)-10-formyltetrahydrofolate + ADP + phosphate. Its pathway is one-carbon metabolism; tetrahydrofolate interconversion. The protein is Formate--tetrahydrofolate ligase of Streptococcus pneumoniae (strain 70585).